Consider the following 241-residue polypeptide: Xyloglucan-specific endo-beta-1,4-glucanase A (241 aa).

The first 16 residues, 1–16 (MKVLALSALLSLASAA), serve as a signal peptide directing secretion. N-linked (GlcNAc...) asparagine glycosylation occurs at N47.

This sequence belongs to the glycosyl hydrolase 12 (cellulase H) family.

The protein resides in the secreted. It catalyses the reaction xyloglucan + H2O = xyloglucan oligosaccharides.. Its function is as follows. Catalyzes endohydrolysis of 1,4-beta-D-glucosidic linkages in xyloglucan with retention of the beta-configuration of the glycosyl residues. Specific for xyloglucan and does not hydrolyze other cell wall components. In Aspergillus niger, this protein is Xyloglucan-specific endo-beta-1,4-glucanase A (xgeA).